The chain runs to 513 residues: Alpha-1B-glycoprotein (513 aa).

A signal peptide spans 1–20 (MSLLTTVLLLWGFTLGPGNA). 5 consecutive Ig-like V-type domains span residues 22-126 (WLDS…VTGK), 127-219 (EPLP…MSAT), 220-312 (QLPP…PVEL), 313-415 (MWSD…LRIN), and 416-513 (GPAP…VEGS). 3 N-linked (GlcNAc...) asparagine glycosylation sites follow: Asn44, Asn89, and Asn192. Cystine bridges form between Cys49/Cys96, Cys153/Cys195, Cys245/Cys292, Cys343/Cys392, and Cys441/Cys488. N-linked (GlcNAc...) asparagine glycans are attached at residues Asn369, Asn381, Asn389, and Asn485.

Interacts with CRISP3. In terms of tissue distribution, isoform 1 is expressed in normal liver. Isoform 2 is expressed in the regenerating liver after partial hepatectomy and at very low levels in the normal lung, brain and testis.

It is found in the secreted. In Rattus norvegicus (Rat), this protein is Alpha-1B-glycoprotein.